The following is a 68-amino-acid chain: Large ribosomal subunit protein bL31 (68 aa).

The Zn(2+) site is built by Cys16, Cys18, Cys36, and Cys39.

The protein belongs to the bacterial ribosomal protein bL31 family. Type A subfamily. As to quaternary structure, part of the 50S ribosomal subunit. Zn(2+) is required as a cofactor.

Functionally, binds the 23S rRNA. The polypeptide is Large ribosomal subunit protein bL31 (Dictyoglomus turgidum (strain DSM 6724 / Z-1310)).